A 1583-amino-acid polypeptide reads, in one-letter code: Transcriptional activator GLI3 (1583 aa).

Position 1 is an N-acetylmethionine (Met1). 2 stretches are compositionally biased toward polar residues: residues 1–10 (MEAQAHSSTA) and 58–78 (ITMQ…PSTS). The tract at residues 1–78 (MEAQAHSSTA…NKISEEPSTS (78 aa)) is disordered. Arg175 carries the post-translational modification Omega-N-methylarginine. Residues 368–475 (QSLGSAFGHS…DKDESKQEPE (108 aa)) are disordered. A compositionally biased stretch (low complexity) spans 403–421 (VQVSSGPSESSQSKPTSES). A Glycyl lysine isopeptide (Lys-Gly) (interchain with G-Cter in SUMO2) cross-link involves residue Lys438. Residues 448–457 (SRGQQEQPEG) show a composition bias toward polar residues. The segment covering 461–474 (VKEEADKDESKQEP) has biased composition (basic and acidic residues). A Glycyl lysine isopeptide (Lys-Gly) (interchain with G-Cter in SUMO2) cross-link involves residue Lys462. 5 C2H2-type zinc fingers span residues 480 to 505 (TNCH…NNDH), 513 to 540 (FVCR…MRRH), 546 to 570 (HKCT…LRSH), 576 to 601 (YVCE…NRTH), and 607 to 632 (YVCK…KTVH). The tract at residues 620–728 (DPSSLRKHVK…PISNYSNSGL (109 aa)) is disordered. Basic and acidic residues predominate over residues 632-648 (HGPEAHVTKKQRGDMHP). Ser664 carries the post-translational modification Phosphoserine. The span at 684-699 (SKREECLQVKTVKAEK) shows a compositional bias: basic and acidic residues. A compositionally biased stretch (low complexity) spans 703–726 (SQPSPGGQSSCSSQQSPISNYSNS). A mediates interaction with DZIP1 region spans residues 745-845 (DETPIMDSTI…VDFTVLNTLN (101 aa)). Lys773 participates in a covalent cross-link: Glycyl lysine isopeptide (Lys-Gly) (interchain with G-Cter in ubiquitin). Lys779 participates in a covalent cross-link: Glycyl lysine isopeptide (Lys-Gly) (interchain with G-Cter in SUMO2); alternate. Lys779 participates in a covalent cross-link: Glycyl lysine isopeptide (Lys-Gly) (interchain with G-Cter in ubiquitin); alternate. Glycyl lysine isopeptide (Lys-Gly) (interchain with G-Cter in ubiquitin) cross-links involve residues Lys784 and Lys800. Residues 809–828 (GNGTQSNNNYSSGGPGTLLP) are disordered. The span at 810–820 (NGTQSNNNYSS) shows a compositional bias: polar residues. Residues Ser849, Ser865, Ser877, Ser907, Ser980, and Ser1006 each carry the phosphoserine; by PKA modification. Low complexity predominate over residues 863 to 880 (RSSGISPCFSSRRSSEAS). The disordered stretch occupies residues 863–918 (RSSGISPCFSSRRSSEASQAEGRPQNVSVADSYDPISTDASRRSSEASQGDGLPSL). A disordered region spans residues 1164-1189 (EVSSGTSDLSSSKLKCGQQRPSAQQP). Over residues 1166 to 1175 (SSGTSDLSSS) the composition is skewed to low complexity.

The protein belongs to the GLI C2H2-type zinc-finger protein family. The phosphorylated form interacts with BTRC. The full-length GLI3 form (GLI3FL) interacts with SUFU and this interaction regulates the formation of either repressor or activator forms of GLI3. Its association with SUFU is regulated by Hh signaling and dissociation of the SUFU-GLI3 interaction requires the presence of the ciliary motor KIF3A. Interacts with KIF7. The activator form of GLI3 (GLI3A) but not the repressor form (GLI3R) can interact with TRPS1. Interacts with ZIC1. Interacts with ZIC3 (via C2H2-type domains 3, 4 and 5); the interaction enhances its transcriptional activity. Interacts with WRD11; the interaction associates EMX1 with GLI3. Interacts with DZIP1; retains GLI3 within the cytoplasm. Post-translationally, phosphorylated by DYRK2 (in vitro). Phosphorylated on multiple sites by protein kinase A (PKA) and phosphorylation by PKA primes further phosphorylation by CK1 and GSK3. Phosphorylation is essential for its proteolytic processing. Transcriptional repressor GLI3R, a C-terminally truncated form, is generated from the full-length GLI3 protein (GLI3FL/GLI3-190) through proteolytic processing. This process requires PKA-primed phosphorylation of GLI3, ubiquitination of GLI3 and the presence of BTRC. GLI3FL is complexed with SUFU in the cytoplasm and is maintained in a neutral state. Without the Hh signal, the SUFU-GLI3 complex is recruited to cilia, leading to the efficient processing of GLI3FL into GLI3R. GLI3R formation leads to its dissociation from SUFU, allowing it to translocate into the nucleus, and repress Hh target genes. When Hh signaling is initiated, SUFU dissociates from GLI3FL and this has two consequences. First, GLI3R production is halted. Second, free GLI3FL translocates to the nucleus, where it is phosphorylated, destabilized, and converted to a transcriptional activator (GLI3A). Phosphorylated in vitro by ULK3.

Its subcellular location is the nucleus. The protein localises to the cytoplasm. The protein resides in the cell projection. It is found in the cilium. Functionally, has a dual function as a transcriptional activator and a repressor of the sonic hedgehog (Shh) pathway, and plays a role in limb development. The full-length GLI3 form (GLI3FL) after phosphorylation and nuclear translocation, acts as an activator (GLI3A) while GLI3R, its C-terminally truncated form, acts as a repressor. A proper balance between the GLI3 activator and the repressor GLI3R, rather than the repressor gradient itself or the activator/repressor ratio gradient, specifies limb digit number and identity. In concert with TRPS1, plays a role in regulating the size of the zone of distal chondrocytes, in restricting the zone of PTHLH expression in distal cells and in activating chondrocyte proliferation. Binds to the minimal GLI-consensus sequence 5'-GGGTGGTC-3'. This Mus musculus (Mouse) protein is Transcriptional activator GLI3 (Gli3).